Reading from the N-terminus, the 405-residue chain is Imidazolonepropionase (405 aa).

Fe(3+) is bound by residues histidine 72 and histidine 74. Zn(2+) contacts are provided by histidine 72 and histidine 74. 4-imidazolone-5-propanoate contacts are provided by arginine 81, tyrosine 144, and histidine 177. Tyrosine 144 contacts N-formimidoyl-L-glutamate. A Fe(3+)-binding site is contributed by histidine 242. A Zn(2+)-binding site is contributed by histidine 242. Position 245 (glutamine 245) interacts with 4-imidazolone-5-propanoate. Aspartate 317 contacts Fe(3+). Aspartate 317 lines the Zn(2+) pocket. N-formimidoyl-L-glutamate is bound by residues asparagine 319 and glycine 321. Position 322 (threonine 322) interacts with 4-imidazolone-5-propanoate.

Belongs to the metallo-dependent hydrolases superfamily. HutI family. Zn(2+) is required as a cofactor. It depends on Fe(3+) as a cofactor.

The protein localises to the cytoplasm. The catalysed reaction is 4-imidazolone-5-propanoate + H2O = N-formimidoyl-L-glutamate. It functions in the pathway amino-acid degradation; L-histidine degradation into L-glutamate; N-formimidoyl-L-glutamate from L-histidine: step 3/3. Its function is as follows. Catalyzes the hydrolytic cleavage of the carbon-nitrogen bond in imidazolone-5-propanoate to yield N-formimidoyl-L-glutamate. It is the third step in the universal histidine degradation pathway. The sequence is that of Imidazolonepropionase from Klebsiella pneumoniae (strain 342).